Here is a 155-residue protein sequence, read N- to C-terminus: Ribosomal RNA large subunit methyltransferase H (155 aa).

S-adenosyl-L-methionine-binding positions include L72, G103, and 122–127 (FGRMVW).

The protein belongs to the RNA methyltransferase RlmH family. As to quaternary structure, homodimer.

It is found in the cytoplasm. The catalysed reaction is pseudouridine(1915) in 23S rRNA + S-adenosyl-L-methionine = N(3)-methylpseudouridine(1915) in 23S rRNA + S-adenosyl-L-homocysteine + H(+). Its function is as follows. Specifically methylates the pseudouridine at position 1915 (m3Psi1915) in 23S rRNA. In Cereibacter sphaeroides (strain ATCC 17023 / DSM 158 / JCM 6121 / CCUG 31486 / LMG 2827 / NBRC 12203 / NCIMB 8253 / ATH 2.4.1.) (Rhodobacter sphaeroides), this protein is Ribosomal RNA large subunit methyltransferase H.